The chain runs to 145 residues: Large ribosomal subunit protein uL11 (145 aa).

Belongs to the universal ribosomal protein uL11 family. In terms of assembly, part of the ribosomal stalk of the 50S ribosomal subunit. Interacts with L10 and the large rRNA to form the base of the stalk. L10 forms an elongated spine to which L12 dimers bind in a sequential fashion forming a multimeric L10(L12)X complex. One or more lysine residues are methylated.

Forms part of the ribosomal stalk which helps the ribosome interact with GTP-bound translation factors. In Rickettsia canadensis (strain McKiel), this protein is Large ribosomal subunit protein uL11.